Consider the following 1958-residue polypeptide: Echinoderm microtubule-associated protein-like 6 (1958 aa).

10 WD repeats span residues 59 to 100 (GHND…TVSL), 104 to 145 (VHTH…LLAS), 148 to 187 (GHSDRIFDISWDPYQPNRVVSCGVKHIKFWTLCGNALTAK), 195 to 233 (GDLQTILCLACAKEDITYSGALNGDIYVWKGLNLVRTIQ), 235 to 273 (AHSAGIFSMYACEEGFATGGRDGCIRLWDTDFKPITKID), 280 to 321 (GYKG…LILQ), 323 to 362 (HCEGELWALALHPKKPLAVTGSDDRSVRLWSLADHALIAR), 364 to 403 (NMEEAVRSVAFSPDGSQLALGMKDGSFIVLRVRDMTEVVH), 406 to 445 (DRKEVIHEMKFSPDGSYLAVGSNDGPVDVYAVAQRYKKIG), and 561 to 601 (GHSA…VSNG). Residues 603-626 (LETAPQEGGADSYSEESDSDLSDV) form a disordered region. Acidic residues predominate over residues 615–626 (YSEESDSDLSDV). WD repeat units follow at residues 725–766 (GHDD…CLSL), 770–811 (QHQR…KIAT), 814–853 (GHKDKIFVVKCNPHHVDKLVTVGIKHIKFWQQAGGGFTSK), 861–900 (GKLETMMCVSYGRMEDLVFSGAATGDIFIWKDILLLKTVK), 901–940 (AHDGPVFAMYALDKGFVTGGKDGIVELWDDMFERCLKTYA), 996–1035 (HMEGEVWGLAAHPLLPICATVSDDKTLRIWELSAQHRMLA), 1038–1077 (KLKKGGRCCAFSPDGKALAVGLNDGSFLVVNADTVEDMVS), 1080–1120 (HRKE…RVGI), 1191–1230 (SDITDVNAASLTKDCSLLATGDDFGFVKLFSYPVKGQHAR), and 1236–1276 (GHSA…TQES). Residues 1322–1337 (KPHQQLKEVSVEERPP) show a composition bias toward basic and acidic residues. Residues 1322–1353 (KPHQQLKEVSVEERPPVSRAAPQPEKLQKNNI) are disordered. WD repeat units lie at residues 1412–1456 (EHTD…TLSM), 1460–1501 (FHSK…KVAS), 1504–1543 (GHLERIFVVEFRPDSDTQFVSVGVKHMKFWTLAGSALLYK), 1553–1591 (AKMQTMLSVAFGANNLTFTGAINGDVYVWKDHFLIRLVA), 1593–1638 (AHTG…CRAF), 1685–1724 (HMEGEIWGLATHPSKDLFISASNDGTARIWDLADKKLLNK), 1726–1767 (SLGH…GKKR), 1768–1807 (DRKSAIQDIRISPDNRFLAVGSSEHTVDFYDLTQGTNLNR), 1880–1919 (ADKADVNCACVTHAGLNIVTGDDFGLVKLFDFPCTEKFAK), and 1925–1958 (GHSAHVTNIRFSYDDKYVVSTGGDDCSVFVWRCL).

This sequence belongs to the WD repeat EMAP family.

It is found in the cytoplasm. The protein localises to the cytoskeleton. May modify the assembly dynamics of microtubules, such that microtubules are slightly longer, but more dynamic. The protein is Echinoderm microtubule-associated protein-like 6 (EML6) of Homo sapiens (Human).